The sequence spans 569 residues: Glutamate--tRNA ligase (569 aa).

The 'HIGH' region motif lies at 108–118 (PNPDFVLHLGS).

It belongs to the class-I aminoacyl-tRNA synthetase family. Glutamate--tRNA ligase type 2 subfamily.

Its subcellular location is the cytoplasm. It carries out the reaction tRNA(Glu) + L-glutamate + ATP = L-glutamyl-tRNA(Glu) + AMP + diphosphate. Catalyzes the attachment of glutamate to tRNA(Glu) in a two-step reaction: glutamate is first activated by ATP to form Glu-AMP and then transferred to the acceptor end of tRNA(Glu). The sequence is that of Glutamate--tRNA ligase from Thermofilum pendens (strain DSM 2475 / Hrk 5).